The sequence spans 78 residues: Pigment-dispersing hormone 2 peptides (78 aa).

Positions 1–21 (MRSGVFVAVLVVVVFALLTQG) are cleaved as a signal peptide. Ala75 is subject to Alanine amide.

The protein belongs to the arthropod PDH family. As to expression, eyestalk sinus gland.

The protein localises to the secreted. Its function is as follows. The pigment-dispersing hormone causes the migration of the distal retinal pigment into the proximal end of the pigment chromatophore cells and thus decreases the amount of light entering the retinulas. May also function as a neurotransmitter and/or neuromodulator. The chain is Pigment-dispersing hormone 2 peptides (PDH2) from Callinectes sapidus (Blue crab).